Consider the following 839-residue polypeptide: Phenylalanine--tRNA ligase beta subunit (839 aa).

The region spanning 42–166 is the tRNA-binding domain; the sequence is GELTGPIVIG…PPSVEGHQLV (125 aa). The B5 domain maps to 421-496; sequence PEMPRQTINA…RKIGFDRIKA (76 aa). Mg(2+) is bound by residues Asp-474, Asp-480, Glu-483, and Glu-484. The FDX-ACB domain maps to 745 to 838; it reads SSFPVAKEDV…AEETCGAQLR (94 aa).

The protein belongs to the phenylalanyl-tRNA synthetase beta subunit family. Type 1 subfamily. In terms of assembly, tetramer of two alpha and two beta subunits. The cofactor is Mg(2+).

The protein resides in the cytoplasm. The enzyme catalyses tRNA(Phe) + L-phenylalanine + ATP = L-phenylalanyl-tRNA(Phe) + AMP + diphosphate + H(+). The sequence is that of Phenylalanine--tRNA ligase beta subunit from Cutibacterium acnes (strain DSM 16379 / KPA171202) (Propionibacterium acnes).